The sequence spans 1422 residues: Guanine nucleotide exchange factor subunit RIC1 (1422 aa).

WD repeat units lie at residues 64 to 103 and 304 to 343; these read TQFG…GDKY and NKTG…LICT. 2 disordered regions span residues 442-462 and 986-1005; these read NPKY…SPFA and SGES…SSSG. Over residues 449-460 the composition is skewed to basic and acidic residues; that stretch reads RAERMPRHEKSP. Residues Thr991 and Thr995 each carry the phosphothreonine modification. A phosphoserine mark is found at Ser1014, Ser1016, Ser1018, Ser1036, and Ser1171. The interval 1021 to 1048 is disordered; sequence AENVPPGKFGLQKTLSMPTGPSGKRWSK. Disordered stretches follow at residues 1179–1198 and 1355–1422; these read THRD…DAFL and DTFQ…CSVS. Over residues 1378 to 1396 the composition is skewed to polar residues; it reads GSCSHGSISQSEPGSNNVV. Residues 1403–1412 show a composition bias toward acidic residues; the sequence is TTQADEEEPL.

The protein belongs to the RIC1 family. As to quaternary structure, forms a complex with RGP1; the interaction enhances RAB6A GTPase activity. Interacts (via central domain) with RGP1. Interacts with RAB6A; the interaction is direct with a preference for RAB6A-GDP. Interacts (via C-terminus domain) with RAB33B; the interaction is direct with a preference for RAB33B-GTP. Interacts with GJA1. Expressed in the eye lens.

The protein localises to the cytoplasm. It localises to the cytosol. It is found in the membrane. In terms of biological role, the RIC1-RGP1 complex acts as a guanine nucleotide exchange factor (GEF), which activates RAB6A by exchanging bound GDP for free GTP, and may thereby be required for efficient fusion of endosome-derived vesicles with the Golgi compartment. The RIC1-RGP1 complex participates in the recycling of mannose-6-phosphate receptors. Required for phosphorylation and localization of GJA1. Is a regulator of procollagen transport and secretion, and is required for correct cartilage morphogenesis and development of the craniofacial skeleton. This Mus musculus (Mouse) protein is Guanine nucleotide exchange factor subunit RIC1.